Here is a 446-residue protein sequence, read N- to C-terminus: Exodeoxyribonuclease 7 large subunit (446 aa).

The protein belongs to the XseA family. In terms of assembly, heterooligomer composed of large and small subunits.

The protein localises to the cytoplasm. The catalysed reaction is Exonucleolytic cleavage in either 5'- to 3'- or 3'- to 5'-direction to yield nucleoside 5'-phosphates.. Functionally, bidirectionally degrades single-stranded DNA into large acid-insoluble oligonucleotides, which are then degraded further into small acid-soluble oligonucleotides. The chain is Exodeoxyribonuclease 7 large subunit from Streptococcus pyogenes serotype M6 (strain ATCC BAA-946 / MGAS10394).